A 240-amino-acid polypeptide reads, in one-letter code: Aspartate/glutamate leucyltransferase (240 aa).

This sequence belongs to the R-transferase family. Bpt subfamily.

The protein resides in the cytoplasm. The enzyme catalyses N-terminal L-glutamyl-[protein] + L-leucyl-tRNA(Leu) = N-terminal L-leucyl-L-glutamyl-[protein] + tRNA(Leu) + H(+). It carries out the reaction N-terminal L-aspartyl-[protein] + L-leucyl-tRNA(Leu) = N-terminal L-leucyl-L-aspartyl-[protein] + tRNA(Leu) + H(+). Functionally, functions in the N-end rule pathway of protein degradation where it conjugates Leu from its aminoacyl-tRNA to the N-termini of proteins containing an N-terminal aspartate or glutamate. This Gluconobacter oxydans (strain 621H) (Gluconobacter suboxydans) protein is Aspartate/glutamate leucyltransferase.